Reading from the N-terminus, the 433-residue chain is O-methyltransferase hasC (433 aa).

Residues glutamate 265 and 293-295 each bind S-adenosyl-L-methionine; that span reads GDF. The active-site Proton acceptor is the histidine 313. The segment at 413-433 is disordered; the sequence is SPRANGNGNSAGGLEWESELM.

Belongs to the class I-like SAM-binding methyltransferase superfamily. Cation-independent O-methyltransferase family. COMT subfamily.

The protein operates within secondary metabolite biosynthesis. O-methyltransferase; part of the gene cluster that mediates the biosynthesis of hexadehydro-astechrome (HAS), a tryptophan-derived iron(III)-complex that acts as a virulence factor in infected mice. Within the pathway, hasC, with the cytochrome P450 monooxygenase hasH and the FAD-linked oxidoreductase hasG, convert the hasE-prenylated Trp-Ala-dipeptide into an O-methylated diketopiperazine that is then released from the hasD NRPS. The HAS biosynthesis begins with the synthesis of a tethered Trp-Ala dipeptide by the NRPS hasD. The 7-dimethylallyltryptophan synthase hasE then catalyzes the prenylation of the hasD-tethered tryptophan or the resulting tethered Trp-Ala dipeptide at the C-7 position of the indole moiety. HAS biosynthesis continues via tethered intermediates with the succesive actions of the cytochrome P450 monooxygenase hasH, the O-methyltransferase hasC, and the FAD-linked oxidoreductase hasG. The resulting O-methylated diketopiperazine is then released from hasD. Finally, three O-methylated diketopiperazine molecules assemble in a trimeric complex with Fe(III) to produce hexadehydro-astechrome. The polypeptide is O-methyltransferase hasC (Aspergillus fumigatus (strain CBS 144.89 / FGSC A1163 / CEA10) (Neosartorya fumigata)).